The sequence spans 243 residues: Tryptophan synthase alpha chain (243 aa).

Active-site proton acceptor residues include glutamate 31 and aspartate 42.

It belongs to the TrpA family. In terms of assembly, tetramer of two alpha and two beta chains.

The catalysed reaction is (1S,2R)-1-C-(indol-3-yl)glycerol 3-phosphate + L-serine = D-glyceraldehyde 3-phosphate + L-tryptophan + H2O. It functions in the pathway amino-acid biosynthesis; L-tryptophan biosynthesis; L-tryptophan from chorismate: step 5/5. In terms of biological role, the alpha subunit is responsible for the aldol cleavage of indoleglycerol phosphate to indole and glyceraldehyde 3-phosphate. The polypeptide is Tryptophan synthase alpha chain (Staphylococcus epidermidis (strain ATCC 35984 / DSM 28319 / BCRC 17069 / CCUG 31568 / BM 3577 / RP62A)).